Here is a 291-residue protein sequence, read N- to C-terminus: Elongation factor Ts (291 aa).

The involved in Mg(2+) ion dislocation from EF-Tu stretch occupies residues 79–82; that stretch reads TDFV.

It belongs to the EF-Ts family.

It localises to the cytoplasm. Functionally, associates with the EF-Tu.GDP complex and induces the exchange of GDP to GTP. It remains bound to the aminoacyl-tRNA.EF-Tu.GTP complex up to the GTP hydrolysis stage on the ribosome. This is Elongation factor Ts from Ruegeria sp. (strain TM1040) (Silicibacter sp.).